We begin with the raw amino-acid sequence, 66 residues long: Large ribosomal subunit protein bL33c (66 aa).

This sequence belongs to the bacterial ribosomal protein bL33 family.

The protein resides in the plastid. The protein localises to the chloroplast. The sequence is that of Large ribosomal subunit protein bL33c from Welwitschia mirabilis (Tree tumbo).